The following is a 338-amino-acid chain: Ketol-acid reductoisomerase (NADP(+)) (338 aa).

The KARI N-terminal Rossmann domain maps to 1-181 (MRVFYDKDCD…GGGRTGIIET (181 aa)). Residues 24–27 (YGSQ), Arg47, Ser50, Thr52, and 82–85 (DEFQ) contribute to the NADP(+) site. His107 is an active-site residue. Residue Gly133 participates in NADP(+) binding. In terms of domain architecture, KARI C-terminal knotted spans 182 to 327 (TFKDETETDL…EKLRAMMPWI (146 aa)). 4 residues coordinate Mg(2+): Asp190, Glu194, Glu226, and Glu230. Ser251 contacts substrate.

Belongs to the ketol-acid reductoisomerase family. The cofactor is Mg(2+).

The catalysed reaction is (2R)-2,3-dihydroxy-3-methylbutanoate + NADP(+) = (2S)-2-acetolactate + NADPH + H(+). It catalyses the reaction (2R,3R)-2,3-dihydroxy-3-methylpentanoate + NADP(+) = (S)-2-ethyl-2-hydroxy-3-oxobutanoate + NADPH + H(+). It functions in the pathway amino-acid biosynthesis; L-isoleucine biosynthesis; L-isoleucine from 2-oxobutanoate: step 2/4. The protein operates within amino-acid biosynthesis; L-valine biosynthesis; L-valine from pyruvate: step 2/4. Involved in the biosynthesis of branched-chain amino acids (BCAA). Catalyzes an alkyl-migration followed by a ketol-acid reduction of (S)-2-acetolactate (S2AL) to yield (R)-2,3-dihydroxy-isovalerate. In the isomerase reaction, S2AL is rearranged via a Mg-dependent methyl migration to produce 3-hydroxy-3-methyl-2-ketobutyrate (HMKB). In the reductase reaction, this 2-ketoacid undergoes a metal-dependent reduction by NADPH to yield (R)-2,3-dihydroxy-isovalerate. This Pseudomonas paraeruginosa (strain DSM 24068 / PA7) (Pseudomonas aeruginosa (strain PA7)) protein is Ketol-acid reductoisomerase (NADP(+)).